A 359-amino-acid polypeptide reads, in one-letter code: UPF0283 membrane protein RL2646 (359 aa).

The interval 1 to 48 (MSKPPSDPPRRAPAAFIYEDEATERRDNGRQGGERRKPESFSEHIVVT) is disordered. Basic and acidic residues predominate over residues 23–42 (TERRDNGRQGGERRKPESFS). Transmembrane regions (helical) follow at residues 77–97 (FGKI…GLWT) and 111–131 (LGYA…ALVI).

This sequence belongs to the UPF0283 family.

It is found in the cell inner membrane. This is UPF0283 membrane protein RL2646 from Rhizobium johnstonii (strain DSM 114642 / LMG 32736 / 3841) (Rhizobium leguminosarum bv. viciae).